Here is a 195-residue protein sequence, read N- to C-terminus: Triosephosphate isomerase, cytosolic (195 aa).

Catalysis depends on histidine 37, which acts as the Electrophile. The active-site Proton acceptor is glutamate 107.

The protein belongs to the triosephosphate isomerase family. As to quaternary structure, homodimer.

Its subcellular location is the cytoplasm. The enzyme catalyses D-glyceraldehyde 3-phosphate = dihydroxyacetone phosphate. It functions in the pathway carbohydrate biosynthesis; gluconeogenesis. It participates in carbohydrate degradation; glycolysis; D-glyceraldehyde 3-phosphate from glycerone phosphate: step 1/1. This chain is Triosephosphate isomerase, cytosolic, found in Lactuca sativa (Garden lettuce).